Here is a 357-residue protein sequence, read N- to C-terminus: Set1 complex component swd2 (357 aa).

WD repeat units lie at residues 24–65, 110–149, 199–241, and 247–289; these read NFVG…KSLA, GHKQ…CQGL, PPHV…RVPS, and TQDG…QTVN.

This sequence belongs to the WD repeat SWD2 family. As to quaternary structure, component of the Set1 complex composed of ash2, sdc1, set1, shg1, spp1, swd1, swd2 and swd3.

The protein localises to the nucleus. In terms of biological role, the Set1 complex specifically methylates 'Lys-4' of histone H3. The chain is Set1 complex component swd2 from Schizosaccharomyces pombe (strain 972 / ATCC 24843) (Fission yeast).